Consider the following 343-residue polypeptide: Small ribosomal subunit biogenesis GTPase RsgA (343 aa).

Residues 116–275 enclose the CP-type G domain; the sequence is RGQLKPVAAN…LIDSPGIREF (160 aa). GTP-binding positions include 163–166 and 217–225; these read NKFD and GQSGVGKSS. 4 residues coordinate Zn(2+): Cys-299, Cys-304, His-306, and Cys-312.

The protein belongs to the TRAFAC class YlqF/YawG GTPase family. RsgA subfamily. As to quaternary structure, monomer. Associates with 30S ribosomal subunit, binds 16S rRNA. Zn(2+) is required as a cofactor.

It is found in the cytoplasm. Its function is as follows. One of several proteins that assist in the late maturation steps of the functional core of the 30S ribosomal subunit. Helps release RbfA from mature subunits. May play a role in the assembly of ribosomal proteins into the subunit. Circularly permuted GTPase that catalyzes slow GTP hydrolysis, GTPase activity is stimulated by the 30S ribosomal subunit. This chain is Small ribosomal subunit biogenesis GTPase RsgA, found in Pseudomonas fluorescens (strain SBW25).